The primary structure comprises 627 residues: uncharacterized protein (627 aa).

7 disordered regions span residues 57–82 (EDAM…QGED), 96–121 (PEAQ…APPG), 160–184 (GCSH…DAAY), 198–232 (AQSQ…CPSG), 247–277 (SHDA…RGAP), 335–358 (RQAG…EAAY), and 449–579 (VFDV…PPLS). Low complexity predominate over residues 169-183 (SSSDQAADAPAGDAA). Residues 336-357 (QAGAEPAQAPATAPAPEGTEAA) show a composition bias toward low complexity. Basic and acidic residues predominate over residues 450-464 (FDVKEQGAHADRDAA).

This is an uncharacterized protein from Treponema pallidum (strain Nichols).